We begin with the raw amino-acid sequence, 207 residues long: Large ribosomal subunit protein uL4 (207 aa).

The disordered stretch occupies residues H49–I78. Over residues G60–G71 the composition is skewed to basic residues.

This sequence belongs to the universal ribosomal protein uL4 family. In terms of assembly, part of the 50S ribosomal subunit.

Its function is as follows. One of the primary rRNA binding proteins, this protein initially binds near the 5'-end of the 23S rRNA. It is important during the early stages of 50S assembly. It makes multiple contacts with different domains of the 23S rRNA in the assembled 50S subunit and ribosome. In terms of biological role, forms part of the polypeptide exit tunnel. This is Large ribosomal subunit protein uL4 from Enterococcus faecalis (strain ATCC 700802 / V583).